Reading from the N-terminus, the 140-residue chain is Mite allergen Der p 21.0101 (140 aa).

A signal peptide spans 1-19 (MKFIITLFAAIVMAAAVSG). Immunodominant conformational IgE-binding epitope stretches follow at residues 20–53 (FIVG…EKGL) and 108–140 (YNYE…DEYY).

This sequence belongs to the mite group 5 allergen family. In terms of assembly, monomer. Homodimer. In terms of tissue distribution, expressed in the epithelium, lumen and microvilli of the midgut, and in feces.

It localises to the cytoplasm. The protein localises to the endoplasmic reticulum. The protein resides in the vesicle. It is found in the secreted. The polypeptide is Mite allergen Der p 21.0101 (Dermatophagoides pteronyssinus (European house dust mite)).